The chain runs to 1064 residues: Error-prone DNA polymerase (1064 aa).

Belongs to the DNA polymerase type-C family. DnaE2 subfamily.

Its subcellular location is the cytoplasm. The catalysed reaction is DNA(n) + a 2'-deoxyribonucleoside 5'-triphosphate = DNA(n+1) + diphosphate. In terms of biological role, DNA polymerase involved in damage-induced mutagenesis and translesion synthesis (TLS). It is not the major replicative DNA polymerase. The chain is Error-prone DNA polymerase from Azoarcus sp. (strain BH72).